The primary structure comprises 248 residues: Coenzyme F420:L-glutamate ligase (248 aa).

GTP contacts are provided by residues 15–18 (IPLI), 45–46 (ET), and Lys-50. Asp-115 contributes to the a divalent metal cation binding site. A GTP-binding site is contributed by Asn-118. A divalent metal cation is bound by residues Asp-155, Ser-156, and Gln-213. Residue 211–218 (MGQSNEGI) participates in GTP binding.

This sequence belongs to the CofE family. Homodimer. Mg(2+) is required as a cofactor. Requires Mn(2+) as cofactor. K(+) serves as cofactor.

It carries out the reaction oxidized coenzyme F420-0 + GTP + L-glutamate = oxidized coenzyme F420-1 + GDP + phosphate + H(+). The catalysed reaction is oxidized coenzyme F420-1 + GTP + L-glutamate = oxidized coenzyme F420-2 + GDP + phosphate + H(+). It participates in cofactor biosynthesis; coenzyme F420 biosynthesis. Functionally, catalyzes the GTP-dependent successive addition of two or more gamma-linked L-glutamates to the L-lactyl phosphodiester of 7,8-didemethyl-8-hydroxy-5-deazariboflavin (F420-0) to form coenzyme F420-0-glutamyl-glutamate (F420-2) or polyglutamated F420 derivatives. In Methanococcus maripaludis (strain C7 / ATCC BAA-1331), this protein is Coenzyme F420:L-glutamate ligase.